Here is a 148-residue protein sequence, read N- to C-terminus: Coactosin (148 aa).

Positions 1–134 constitute an ADF-H domain; that stretch reads MSGFDLSEVA…VEDEIAAKIK (134 aa). The F-loop; important for stable binding to G-actin and F-actin signature appears at 71-76; sequence DEESKR. At Ser-147 the chain carries Phosphoserine.

This sequence belongs to the actin-binding proteins ADF family. Coactosin subfamily. Interacts with 14-3-3 protein 3. In terms of processing, phosphorylation at Ser-147 appears not to affect its binding to actin; however, it may regulate phagocytosis and motility.

It localises to the cytoplasm. The protein resides in the cell projection. Its subcellular location is the phagocytic cup. The protein localises to the pseudopodium. It is found in the cell membrane. It localises to the cytoskeleton. Its function is as follows. Actin-binding protein which is involved in F-actin stabilization. May play a role during phagocytosis and pseudopod formation by contributing to the maintenance of F-actin. The chain is Coactosin from Entamoeba histolytica (strain ATCC 30459 / HM-1:IMSS / ABRM).